The sequence spans 76 residues: Sec-independent protein translocase protein TatA (76 aa).

Residues 1 to 21 (MGGLSIWHWLIVLLIVALVFG) form a helical membrane-spanning segment. The disordered stretch occupies residues 43–76 (MKEGEAPADAQQLPRSGSVDVNAKETTRSDSNKA). A compositionally biased stretch (basic and acidic residues) spans 64–76 (NAKETTRSDSNKA).

The protein belongs to the TatA/E family. As to quaternary structure, the Tat system comprises two distinct complexes: a TatABC complex, containing multiple copies of TatA, TatB and TatC subunits, and a separate TatA complex, containing only TatA subunits. Substrates initially bind to the TatABC complex, which probably triggers association of the separate TatA complex to form the active translocon.

It localises to the cell inner membrane. Part of the twin-arginine translocation (Tat) system that transports large folded proteins containing a characteristic twin-arginine motif in their signal peptide across membranes. TatA could form the protein-conducting channel of the Tat system. The protein is Sec-independent protein translocase protein TatA of Burkholderia lata (strain ATCC 17760 / DSM 23089 / LMG 22485 / NCIMB 9086 / R18194 / 383).